The following is a 434-amino-acid chain: 4-hydroxyphenylpyruvate dioxygenase (434 aa).

The tract at residues 1–21 (MPPTPTTPAATGAAAAVTPEH) is disordered. Residues 7 to 19 (TPAATGAAAAVTP) show a composition bias toward low complexity. VOC domains are found at residues 41–192 (SFHH…FLPG) and 208–368 (RFDH…IFTK). The Fe cation site is built by histidine 211, histidine 293, and glutamate 379.

It belongs to the 4HPPD family. It depends on Fe cation as a cofactor.

It is found in the cytoplasm. The enzyme catalyses 3-(4-hydroxyphenyl)pyruvate + O2 = homogentisate + CO2. It participates in amino-acid degradation; L-phenylalanine degradation; acetoacetate and fumarate from L-phenylalanine: step 3/6. Its pathway is cofactor biosynthesis; prenylquinone biosynthesis. This chain is 4-hydroxyphenylpyruvate dioxygenase, found in Hordeum vulgare (Barley).